Reading from the N-terminus, the 86-residue chain is Large ribosomal subunit protein uL23 (86 aa).

Belongs to the universal ribosomal protein uL23 family. Part of the 50S ribosomal subunit. Contacts protein L29.

Functionally, binds to 23S rRNA. One of the proteins that surrounds the polypeptide exit tunnel on the outside of the ribosome. In Pyrococcus horikoshii (strain ATCC 700860 / DSM 12428 / JCM 9974 / NBRC 100139 / OT-3), this protein is Large ribosomal subunit protein uL23.